Here is a 297-residue protein sequence, read N- to C-terminus: Tumor necrosis factor receptor superfamily member 27 (297 aa).

At 1 to 138 (MDCQENEYRD…AHTVPPREAT (138 aa)) the chain is on the extracellular side. TNFR-Cys repeat units follow at residues 2–41 (DCQENEYRDQWGRCVTCQQCGPGQELSKDCGYGEGGDAHC), 43–83 (VCPP…NAIC), and 85–118 (DCLPRFYRKTRIGGLQDQECIPCTKQTPSSEVQC). Cystine bridges form between C3-C15, C18-C31, C21-C41, C44-C58, C61-C75, C64-C83, C86-C104, and C107-C118. N-linked (GlcNAc...) asparagine glycosylation is found at N74 and N77. The helical; Signal-anchor for type III membrane protein transmembrane segment at 139–159 (LVALVGSLLVVFALAFLGLFF) threads the bilayer. Residues 160–297 (LYCKQIFNRH…LYVPFEVPSL (138 aa)) are Cytoplasmic-facing.

As to quaternary structure, associates with TRAF1, TRAF3 and TRAF6.

The protein resides in the membrane. In terms of biological role, receptor for EDA isoform A2, but not for EDA isoform A1. Mediates the activation of the NF-kappa-B and JNK pathways. Activation seems to be mediated by binding to TRAF3 and TRAF6. The polypeptide is Tumor necrosis factor receptor superfamily member 27 (Eda2r) (Mus musculus (Mouse)).